The primary structure comprises 418 residues: Glutamyl-tRNA reductase (418 aa).

Substrate-binding positions include 49 to 52, Ser-109, 114 to 116, and Gln-120; these read TCNR and EPQ. Cys-50 acts as the Nucleophile in catalysis. Residue 189–194 participates in NADP(+) binding; the sequence is GAGETI.

Belongs to the glutamyl-tRNA reductase family. As to quaternary structure, homodimer.

It catalyses the reaction (S)-4-amino-5-oxopentanoate + tRNA(Glu) + NADP(+) = L-glutamyl-tRNA(Glu) + NADPH + H(+). It participates in porphyrin-containing compound metabolism; protoporphyrin-IX biosynthesis; 5-aminolevulinate from L-glutamyl-tRNA(Glu): step 1/2. Catalyzes the NADPH-dependent reduction of glutamyl-tRNA(Glu) to glutamate 1-semialdehyde (GSA). The protein is Glutamyl-tRNA reductase of Escherichia coli O139:H28 (strain E24377A / ETEC).